Reading from the N-terminus, the 238-residue chain is Ribosomal RNA small subunit methyltransferase G (238 aa).

Residues G77, F82, 128–129 (AE), and R147 each bind S-adenosyl-L-methionine.

Belongs to the methyltransferase superfamily. RNA methyltransferase RsmG family.

It localises to the cytoplasm. Functionally, specifically methylates the N7 position of guanine in position 535 of 16S rRNA. The protein is Ribosomal RNA small subunit methyltransferase G of Listeria monocytogenes serotype 4b (strain F2365).